Here is a 264-residue protein sequence, read N- to C-terminus: Virulence plasmid protein pGP3-D (264 aa).

This Chlamydia trachomatis serovar L2 (strain ATCC VR-902B / DSM 19102 / 434/Bu) protein is Virulence plasmid protein pGP3-D.